Here is a 74-residue protein sequence, read N- to C-terminus: U19-theraphotoxin-Cg1a (74 aa).

An N-terminal signal peptide occupies residues I1–S7. Residues A8 to Q36 constitute a propeptide that is removed on maturation. 3 disulfide bridges follow: C39/C53, C46/C58, and C52/C66.

It belongs to the neurotoxin 10 (Hwtx-1) family. 38 (Jztx-33) subfamily. In terms of tissue distribution, expressed by the venom gland.

The protein localises to the secreted. Functionally, probable ion channel inhibitor. The protein is U19-theraphotoxin-Cg1a of Chilobrachys guangxiensis (Chinese earth tiger tarantula).